We begin with the raw amino-acid sequence, 361 residues long: Phosphoserine aminotransferase (361 aa).

Ser-9 and Arg-42 together coordinate L-glutamate. Residues 76–77 (AR), Trp-102, Thr-153, Asp-173, and Gln-196 each bind pyridoxal 5'-phosphate. The residue at position 197 (Lys-197) is an N6-(pyridoxal phosphate)lysine. 238–239 (NT) lines the pyridoxal 5'-phosphate pocket.

Belongs to the class-V pyridoxal-phosphate-dependent aminotransferase family. SerC subfamily. Homodimer. Pyridoxal 5'-phosphate is required as a cofactor.

It is found in the cytoplasm. It carries out the reaction O-phospho-L-serine + 2-oxoglutarate = 3-phosphooxypyruvate + L-glutamate. The enzyme catalyses 4-(phosphooxy)-L-threonine + 2-oxoglutarate = (R)-3-hydroxy-2-oxo-4-phosphooxybutanoate + L-glutamate. The protein operates within amino-acid biosynthesis; L-serine biosynthesis; L-serine from 3-phospho-D-glycerate: step 2/3. Its pathway is cofactor biosynthesis; pyridoxine 5'-phosphate biosynthesis; pyridoxine 5'-phosphate from D-erythrose 4-phosphate: step 3/5. Its function is as follows. Catalyzes the reversible conversion of 3-phosphohydroxypyruvate to phosphoserine and of 3-hydroxy-2-oxo-4-phosphonooxybutanoate to phosphohydroxythreonine. The chain is Phosphoserine aminotransferase from Erwinia tasmaniensis (strain DSM 17950 / CFBP 7177 / CIP 109463 / NCPPB 4357 / Et1/99).